Reading from the N-terminus, the 213-residue chain is LexA repressor (213 aa).

The segment at residues 29–49 (RAEIAQALGFRSPNAAEDHLK) is a DNA-binding region (H-T-H motif). Active-site for autocatalytic cleavage activity residues include Ser131 and Lys168.

The protein belongs to the peptidase S24 family. As to quaternary structure, homodimer.

The catalysed reaction is Hydrolysis of Ala-|-Gly bond in repressor LexA.. Functionally, represses a number of genes involved in the response to DNA damage (SOS response), including recA and lexA. In the presence of single-stranded DNA, RecA interacts with LexA causing an autocatalytic cleavage which disrupts the DNA-binding part of LexA, leading to derepression of the SOS regulon and eventually DNA repair. This chain is LexA repressor, found in Bordetella avium (strain 197N).